The sequence spans 130 residues: Small ribosomal subunit protein uS9 (130 aa).

Residues L98–R130 are disordered. Residues K111–R130 are compositionally biased toward basic residues.

Belongs to the universal ribosomal protein uS9 family.

The chain is Small ribosomal subunit protein uS9 from Sorangium cellulosum (strain So ce56) (Polyangium cellulosum (strain So ce56)).